The sequence spans 344 residues: Dihydroorotase (344 aa).

Positions 13 and 15 each coordinate Zn(2+). Substrate is bound by residues 15–17 (HLR) and asparagine 41. Zn(2+) contacts are provided by lysine 99, histidine 136, and histidine 174. Lysine 99 bears the N6-carboxylysine mark. Histidine 136 serves as a coordination point for substrate. Leucine 219 contacts substrate. Zn(2+) is bound at residue aspartate 247. The active site involves aspartate 247. Residues histidine 251 and alanine 263 each coordinate substrate.

Belongs to the metallo-dependent hydrolases superfamily. DHOase family. Class II DHOase subfamily. As to quaternary structure, homodimer. Zn(2+) is required as a cofactor.

It catalyses the reaction (S)-dihydroorotate + H2O = N-carbamoyl-L-aspartate + H(+). The protein operates within pyrimidine metabolism; UMP biosynthesis via de novo pathway; (S)-dihydroorotate from bicarbonate: step 3/3. In terms of biological role, catalyzes the reversible cyclization of carbamoyl aspartate to dihydroorotate. This is Dihydroorotase from Idiomarina loihiensis (strain ATCC BAA-735 / DSM 15497 / L2-TR).